The primary structure comprises 394 residues: RHOMBOID-like protein 4 (394 aa).

The interval 1-51 (MGEKDSETAPIWGKTRERERSNNNNIQPMDLESSSSVSGQQRSLTQSRSSY) is disordered. A compositionally biased stretch (polar residues) spans 39 to 49 (GQQRSLTQSRS). A run of 7 helical transmembrane segments spans residues 64 to 84 (WFPWLIPCFVVANVAVFVITM), 147 to 167 (WLHGGVVHLLMNMLTLLFIGI), 175 to 195 (FIRIGLLYLISGFGGSILSAL), 201 to 221 (ISVGASGAVFGLLGGMLSEIF), 231 to 251 (VVTIVTLVLIVAVNLGLGVLP), 254 to 274 (DNFAHIGGFATGFLLGFVLLI), and 300 to 320 (ILWTISLLILVAGFIVGLISL). Catalysis depends on serine 206, which acts as the Nucleophile. The Charge relay system role is filled by histidine 258.

Belongs to the peptidase S54 family.

It localises to the membrane. It catalyses the reaction Cleaves type-1 transmembrane domains using a catalytic dyad composed of serine and histidine that are contributed by different transmembrane domains.. Probable rhomboid-type serine protease that catalyzes intramembrane proteolysis. The protein is RHOMBOID-like protein 4 of Arabidopsis thaliana (Mouse-ear cress).